The sequence spans 331 residues: SERPKRVFNIYWNVPTFMCHQYGLYFDEVTNFNIKHNSKDNFQGDKIAIFYDPGEFPALLPLKYGKYKIRNGGVPQEGNITIHLQRFIEHLDKTYPNRNFSGIGVIDFERWRPIFRQNWGNMKIYKNFSIDLVRKEHPFWNKKMIELEASKRFEKYARLFMEETLKLAKKTRKQADWGYYGYPYCFNMSPTNFVPDCDVTAMRENDEMSWLFNNQNVLLPSVYVRRELTPDQRIGLVQGRVKEAVRISNNLKHSPKVFSYWWYVYQDETNTFLTETDVKKTFQEIVINGGDGIIIWGSSSDVNSLSKCMRLREYLLTVLGPIAVNVTEAVN.

2 disulfides stabilise this stretch: C19/C308 and C185/C197. N79 carries N-linked (GlcNAc...) asparagine glycosylation. E109 acts as the Proton donor in catalysis.

This sequence belongs to the glycosyl hydrolase 56 family. Expressed by the venom gland.

Its subcellular location is the secreted. It catalyses the reaction Random hydrolysis of (1-&gt;4)-linkages between N-acetyl-beta-D-glucosamine and D-glucuronate residues in hyaluronate.. Functionally, hydrolyzes high molecular weight hyaluronic acid to produce small oligosaccharides. This chain is Hyaluronidase B, found in Vespa velutina (Asian yellow-legged hornet).